The sequence spans 272 residues: TIP41-like protein (272 aa).

Residue K106 is modified to N6-acetyllysine. Positions 173 to 272 (RVMPSSFFLL…ADSQKSTQVE (100 aa)) are interaction with PPP2CA. The residue at position 265 (S265) is a Phosphoserine.

It belongs to the TIP41 family. As to quaternary structure, isoform 1 interacts with PPP2CA. Isoform 2 does not interact with PPP2CA. Interacts with PPP2CB, PPP4C and PPP6C. Interacts with IGBP1; the interaction is dependent on PPP2CA. Associates with a protein phosphatase 2A PP2A(C):IGBP1 complex. Interacts with PPP4C and PPP4R2.

It is found in the cytoplasm. Its function is as follows. May be a allosteric regulator of serine/threonine-protein phosphatase 2A (PP2A). Isoform 1 inhibits catalytic activity of the PP2A(D) core complex in vitro. The PP2A(C):TIPRL complex does not show phosphatase activity. Acts as a negative regulator of serine/threonine-protein phosphatase 4 probably by inhibiting the formation of the active PPP4C:PPP4R2 complex; the function is proposed to implicate it in DNA damage response by promoting H2AX phosphorylated on Ser-140 (gamma-H2AX). May play a role in the regulation of ATM/ATR signaling pathway controlling DNA replication and repair. The protein is TIP41-like protein (TIPRL) of Homo sapiens (Human).